The sequence spans 150 residues: D-aminoacyl-tRNA deacylase (150 aa).

Residues 138–139 (GP) carry the Gly-cisPro motif, important for rejection of L-amino acids motif.

Belongs to the DTD family. As to quaternary structure, homodimer.

The protein resides in the cytoplasm. The catalysed reaction is glycyl-tRNA(Ala) + H2O = tRNA(Ala) + glycine + H(+). It catalyses the reaction a D-aminoacyl-tRNA + H2O = a tRNA + a D-alpha-amino acid + H(+). Functionally, an aminoacyl-tRNA editing enzyme that deacylates mischarged D-aminoacyl-tRNAs. Also deacylates mischarged glycyl-tRNA(Ala), protecting cells against glycine mischarging by AlaRS. Acts via tRNA-based rather than protein-based catalysis; rejects L-amino acids rather than detecting D-amino acids in the active site. By recycling D-aminoacyl-tRNA to D-amino acids and free tRNA molecules, this enzyme counteracts the toxicity associated with the formation of D-aminoacyl-tRNA entities in vivo and helps enforce protein L-homochirality. The chain is D-aminoacyl-tRNA deacylase from Chlorobaculum tepidum (strain ATCC 49652 / DSM 12025 / NBRC 103806 / TLS) (Chlorobium tepidum).